A 285-amino-acid polypeptide reads, in one-letter code: Nucleotide-binding protein Pfl01_0854 (285 aa).

ATP is bound at residue 8-15; that stretch reads GRSGSGKS. 60-63 is a GTP binding site; the sequence is DARN.

The protein belongs to the RapZ-like family.

Its function is as follows. Displays ATPase and GTPase activities. In Pseudomonas fluorescens (strain Pf0-1), this protein is Nucleotide-binding protein Pfl01_0854.